Here is a 310-residue protein sequence, read N- to C-terminus: Malate dehydrogenase (310 aa).

NAD(+)-binding positions include 7–13 (GAAGGIG) and D34. Substrate contacts are provided by R81 and R87. Residues N94 and 117–119 (ITN) each bind NAD(+). Residues N119 and R153 each coordinate substrate. H177 (proton acceptor) is an active-site residue. Position 227 (M227) interacts with NAD(+).

This sequence belongs to the LDH/MDH superfamily. MDH type 1 family. In terms of assembly, homodimer.

It catalyses the reaction (S)-malate + NAD(+) = oxaloacetate + NADH + H(+). In terms of biological role, catalyzes the reversible oxidation of malate to oxaloacetate. The polypeptide is Malate dehydrogenase (Idiomarina loihiensis (strain ATCC BAA-735 / DSM 15497 / L2-TR)).